The primary structure comprises 179 residues: ATP synthase subunit delta (179 aa).

This sequence belongs to the ATPase delta chain family. In terms of assembly, F-type ATPases have 2 components, F(1) - the catalytic core - and F(0) - the membrane proton channel. F(1) has five subunits: alpha(3), beta(3), gamma(1), delta(1), epsilon(1). F(0) has three main subunits: a(1), b(2) and c(10-14). The alpha and beta chains form an alternating ring which encloses part of the gamma chain. F(1) is attached to F(0) by a central stalk formed by the gamma and epsilon chains, while a peripheral stalk is formed by the delta and b chains.

Its subcellular location is the cell membrane. In terms of biological role, f(1)F(0) ATP synthase produces ATP from ADP in the presence of a proton or sodium gradient. F-type ATPases consist of two structural domains, F(1) containing the extramembraneous catalytic core and F(0) containing the membrane proton channel, linked together by a central stalk and a peripheral stalk. During catalysis, ATP synthesis in the catalytic domain of F(1) is coupled via a rotary mechanism of the central stalk subunits to proton translocation. Its function is as follows. This protein is part of the stalk that links CF(0) to CF(1). It either transmits conformational changes from CF(0) to CF(1) or is implicated in proton conduction. The sequence is that of ATP synthase subunit delta from Clostridium botulinum (strain Kyoto / Type A2).